A 113-amino-acid chain; its full sequence is uncharacterized protein (113 aa).

This is an uncharacterized protein from Saccharomyces cerevisiae (strain ATCC 204508 / S288c) (Baker's yeast).